The sequence spans 364 residues: tRNA-specific 2-thiouridylase MnmA 2 (364 aa).

ATP-binding positions include 10–17 (GMSGGVDS) and M36. The active-site Nucleophile is C106. The cysteines at positions 106 and 204 are disulfide-linked. G130 lines the ATP pocket. Positions 154–156 (KDQ) are interaction with tRNA. The Cysteine persulfide intermediate role is filled by C204. An interaction with tRNA region spans residues 310 to 311 (RY).

Belongs to the MnmA/TRMU family.

Its subcellular location is the cytoplasm. It catalyses the reaction S-sulfanyl-L-cysteinyl-[protein] + uridine(34) in tRNA + AH2 + ATP = 2-thiouridine(34) in tRNA + L-cysteinyl-[protein] + A + AMP + diphosphate + H(+). Its function is as follows. Catalyzes the 2-thiolation of uridine at the wobble position (U34) of tRNA, leading to the formation of s(2)U34. This Caldanaerobacter subterraneus subsp. tengcongensis (strain DSM 15242 / JCM 11007 / NBRC 100824 / MB4) (Thermoanaerobacter tengcongensis) protein is tRNA-specific 2-thiouridylase MnmA 2.